Here is a 67-residue protein sequence, read N- to C-terminus: DNA-directed RNA polymerase subunit omega (67 aa).

Belongs to the RNA polymerase subunit omega family. In terms of assembly, the RNAP catalytic core consists of 2 alpha, 1 beta, 1 beta' and 1 omega subunit. When a sigma factor is associated with the core the holoenzyme is formed, which can initiate transcription.

It carries out the reaction RNA(n) + a ribonucleoside 5'-triphosphate = RNA(n+1) + diphosphate. In terms of biological role, promotes RNA polymerase assembly. Latches the N- and C-terminal regions of the beta' subunit thereby facilitating its interaction with the beta and alpha subunits. This chain is DNA-directed RNA polymerase subunit omega, found in Leptothrix cholodnii (strain ATCC 51168 / LMG 8142 / SP-6) (Leptothrix discophora (strain SP-6)).